The primary structure comprises 161 residues: N5-carboxyaminoimidazole ribonucleotide mutase (161 aa).

S9, D12, and R39 together coordinate substrate.

It belongs to the AIR carboxylase family. Class I subfamily.

The enzyme catalyses 5-carboxyamino-1-(5-phospho-D-ribosyl)imidazole + H(+) = 5-amino-1-(5-phospho-D-ribosyl)imidazole-4-carboxylate. Its pathway is purine metabolism; IMP biosynthesis via de novo pathway; 5-amino-1-(5-phospho-D-ribosyl)imidazole-4-carboxylate from 5-amino-1-(5-phospho-D-ribosyl)imidazole (N5-CAIR route): step 2/2. Catalyzes the conversion of N5-carboxyaminoimidazole ribonucleotide (N5-CAIR) to 4-carboxy-5-aminoimidazole ribonucleotide (CAIR). This is N5-carboxyaminoimidazole ribonucleotide mutase from Aliivibrio fischeri (strain ATCC 700601 / ES114) (Vibrio fischeri).